The primary structure comprises 198 residues: Phosphoheptose isomerase (198 aa).

In terms of domain architecture, SIS spans 40 to 198 (IIGALRGGHK…IEAALMQDAR (159 aa)). A substrate-binding site is contributed by 55 to 57 (NGG). Positions 64 and 68 each coordinate Zn(2+). Substrate-binding positions include Glu-68, 97-98 (ND), 123-125 (STS), Ser-128, and Gln-175. Zn(2+)-binding residues include Gln-175 and His-183.

It belongs to the SIS family. GmhA subfamily. Homotetramer. The cofactor is Zn(2+).

It is found in the cytoplasm. It carries out the reaction 2 D-sedoheptulose 7-phosphate = D-glycero-alpha-D-manno-heptose 7-phosphate + D-glycero-beta-D-manno-heptose 7-phosphate. The protein operates within carbohydrate biosynthesis; D-glycero-D-manno-heptose 7-phosphate biosynthesis; D-glycero-alpha-D-manno-heptose 7-phosphate and D-glycero-beta-D-manno-heptose 7-phosphate from sedoheptulose 7-phosphate: step 1/1. Its function is as follows. Catalyzes the isomerization of sedoheptulose 7-phosphate in D-glycero-D-manno-heptose 7-phosphate. The chain is Phosphoheptose isomerase from Bradyrhizobium sp. (strain ORS 278).